The following is a 315-amino-acid chain: Methionyl-tRNA formyltransferase (315 aa).

Residue 113 to 116 (SILP) coordinates (6S)-5,6,7,8-tetrahydrofolate.

Belongs to the Fmt family.

The catalysed reaction is L-methionyl-tRNA(fMet) + (6R)-10-formyltetrahydrofolate = N-formyl-L-methionyl-tRNA(fMet) + (6S)-5,6,7,8-tetrahydrofolate + H(+). Its function is as follows. Attaches a formyl group to the free amino group of methionyl-tRNA(fMet). The formyl group appears to play a dual role in the initiator identity of N-formylmethionyl-tRNA by promoting its recognition by IF2 and preventing the misappropriation of this tRNA by the elongation apparatus. In Aliivibrio fischeri (strain ATCC 700601 / ES114) (Vibrio fischeri), this protein is Methionyl-tRNA formyltransferase.